Reading from the N-terminus, the 132-residue chain is U-scoloptoxin(11)-Sa1a (132 aa).

Positions 1–19 (MIRFFAFVLFFATQELILC) are cleaved as a signal peptide.

It belongs to the scoloptoxin-11 family. Post-translationally, contains 5 disulfide bonds. In terms of tissue distribution, expressed by the venom gland.

It is found in the secreted. The protein is U-scoloptoxin(11)-Sa1a of Scolopendra alternans (Florida Keys giant centipede).